A 57-amino-acid chain; its full sequence is Phosphatase RapH inhibitor (57 aa).

2 consecutive propeptides follow at residues 1-34 and 41-57; these read MPIK…FKES and YIDH…KALS. A disordered region spans residues 26-57; the sequence is TNSGGFKESTDRNTTYIDHSPYKLSDQKKALS.

This sequence belongs to the Phr family. Contains a predicted signal peptide cleavage site in the N-terminal region, however the propeptide is probably only subject to processing events at the ends of the mature peptide.

It localises to the secreted. Its subcellular location is the cytoplasm. Functionally, signaling molecule involved the regulation of both sporulation and competence. Secreted during production, but the mature peptide acts intracellularly, indicating that it needs to be imported into the cell to function. Acts by inhibiting RapH activity. Can inhibit both RapH activities, the dephosphorylation of Spo0F and the sequestration of ComA. This Bacillus subtilis (strain 168) protein is Phosphatase RapH inhibitor (phrH).